The following is an 89-amino-acid chain: Large ribosomal subunit protein bL27 (89 aa).

The protein belongs to the bacterial ribosomal protein bL27 family.

The polypeptide is Large ribosomal subunit protein bL27 (Cereibacter sphaeroides (strain ATCC 17029 / ATH 2.4.9) (Rhodobacter sphaeroides)).